We begin with the raw amino-acid sequence, 398 residues long: uncharacterized protein (398 aa).

10 helical membrane-spanning segments follow: residues 43–65 (PILP…VGGL), 89–108 (IFVV…LGLS), 156–173 (TAGA…ILYL), 180–198 (IILI…LYFV), 224–246 (LFIL…ILRA), 259–281 (IIIP…IPFG), 291–311 (SVLT…AYFI), 316–338 (LILL…KAYV), 351–373 (LGLF…GYLW), and 380–397 (TFLY…LLLF).

This sequence belongs to the major facilitator superfamily.

It localises to the cell membrane. This is an uncharacterized protein from Methanocaldococcus jannaschii (strain ATCC 43067 / DSM 2661 / JAL-1 / JCM 10045 / NBRC 100440) (Methanococcus jannaschii).